Consider the following 301-residue polypeptide: Large ribosomal subunit protein uL4 (301 aa).

A large ribosomal subunit protein uL4 region spans residues 1–223 (MNETKTIDVL…TQALSAQPEV (223 aa)). The disordered stretch occupies residues 49-105 (QGTHATKTRGQVSGGGKKPWRQKGTGRARQGSTRAPQWVGGGTVHGPQPRSYAQRTP). The segment at 224–301 (PETNVADQHP…KSDSEKEDAK (78 aa)) is unknown.

The protein belongs to the universal ribosomal protein uL4 family. In terms of assembly, part of the 50S ribosomal subunit.

One of the primary rRNA binding proteins, this protein initially binds near the 5'-end of the 23S rRNA. It is important during the early stages of 50S assembly. It makes multiple contacts with different domains of the 23S rRNA in the assembled 50S subunit and ribosome. Functionally, forms part of the polypeptide exit tunnel. The chain is Large ribosomal subunit protein uL4 from Cutibacterium acnes (strain DSM 16379 / KPA171202) (Propionibacterium acnes).